The primary structure comprises 758 residues: Ribosomal RNA processing protein 1 homolog B (758 aa).

S245 carries the post-translational modification Phosphoserine. A compositionally biased stretch (basic residues) spans 259-272 (AVSKKKTALGKNHS). Residues 259–285 (AVSKKKTALGKNHSRKDGLSDERGRDD) are disordered. A compositionally biased stretch (basic and acidic residues) spans 273–285 (RKDGLSDERGRDD). S350, S392, S394, and S395 each carry phosphoserine. The segment at 381-598 (GSRVFCVEEE…KTASLKKRKK (218 aa)) is disordered. The segment covering 397–408 (QKRRRKKKKKHH) has biased composition (basic residues). Over residues 447-457 (GAEATSSTGEE) the composition is skewed to low complexity. A phosphoserine mark is found at S452 and S458. Residues 469 to 481 (HNKRKRPRKKSPR) are compositionally biased toward basic residues. Residues 498 to 513 (SQSGPSGSHPQGPRGS) show a composition bias toward low complexity. Residue S513 is modified to Phosphoserine. Basic residues predominate over residues 566 to 575 (QRRRLQKKKA). The residue at position 579 (S579) is a Phosphoserine. K652 carries the N6-acetyllysine modification. The disordered stretch occupies residues 660–681 (KSSTATHPPGPAVQLNKTPSSS). 2 positions are modified to phosphoserine: S702 and S706. Positions 707–758 (PTGPSRVAFDPEQKPLHGVLKTPTSSPASSPLVAKKPLTTTPRRRPRAMDFF) are disordered. At R712 the chain carries Citrulline. T728 is subject to Phosphothreonine. Residues S732, S735, and S736 each carry the phosphoserine modification.

The protein belongs to the RRP1 family. Interacts with the transcriptional activator E2F1. Interacts with serine/threonine-protein phosphatase PP1 subunits PPP1CB and PPP1CC but not with PPP1CA. Interacts with 60S ribosomal proteins RPL5 and RPL27, ribosomal processing protein RRP1/NNP1 and other nucleolar proteins including NOP2/NOL1 and FBL. Also interacts with nucleolar protein NPM1/B23. Interacts with splicing factor SRSF1 and with LUC7L3/CROP. Interacts with GTPase activator SIPA1. Interacts with CBX5/HP1alpha, H1-10, NCL, PARP1, TRIM28 and YBX3. As to quaternary structure, (Microbial infection) Interacts with influenza A virus nucleoprotein NP and with RNA-directed RNA polymerase subunits PB1 and PB2. In terms of processing, citrullinated by PADI4.

It is found in the nucleus. Its subcellular location is the nucleolus. The protein resides in the nucleoplasm. The protein localises to the chromosome. Functionally, positively regulates DNA damage-induced apoptosis by acting as a transcriptional coactivator of proapoptotic target genes of the transcriptional activator E2F1. Likely to play a role in ribosome biogenesis by targeting serine/threonine protein phosphatase PP1 to the nucleolus. Involved in regulation of mRNA splicing. Inhibits SIPA1 GTPase activity. Involved in regulating expression of extracellular matrix genes. Associates with chromatin and may play a role in modulating chromatin structure. (Microbial infection) Following influenza A virus (IAV) infection, promotes viral mRNA transcription by facilitating the binding of IAV RNA-directed RNA polymerase to capped mRNA. The chain is Ribosomal RNA processing protein 1 homolog B (RRP1B) from Homo sapiens (Human).